The primary structure comprises 505 residues: Maturase K (505 aa).

Belongs to the intron maturase 2 family. MatK subfamily.

It is found in the plastid. The protein localises to the chloroplast. Its function is as follows. Usually encoded in the trnK tRNA gene intron. Probably assists in splicing its own and other chloroplast group II introns. The protein is Maturase K of Calycanthus occidentalis (Spice bush).